A 243-amino-acid polypeptide reads, in one-letter code: Small ribosomal subunit protein uS2 (243 aa).

It belongs to the universal ribosomal protein uS2 family.

The chain is Small ribosomal subunit protein uS2 from Aliivibrio salmonicida (strain LFI1238) (Vibrio salmonicida (strain LFI1238)).